The sequence spans 428 residues: GTPase Obg (428 aa).

An Obg domain is found at 1 to 158 (MFVDQVKIYV…RYVTLELKLL (158 aa)). In terms of domain architecture, OBG-type G spans 159 to 329 (ADVGLVGFPS…LLFAIADLLE (171 aa)). GTP contacts are provided by residues 165–172 (GFPSVGKS), 190–194 (FTTIV), 212–215 (DLPG), 282–285 (NKMD), and 310–312 (SAV). Positions 172 and 192 each coordinate Mg(2+). The OCT domain occupies 350 to 428 (KLEKEEAPFH…LLNYEFEFVD (79 aa)).

Belongs to the TRAFAC class OBG-HflX-like GTPase superfamily. OBG GTPase family. As to quaternary structure, monomer. Mg(2+) serves as cofactor.

The protein resides in the cytoplasm. An essential GTPase which binds GTP, GDP and possibly (p)ppGpp with moderate affinity, with high nucleotide exchange rates and a fairly low GTP hydrolysis rate. Plays a role in control of the cell cycle, stress response, ribosome biogenesis and in those bacteria that undergo differentiation, in morphogenesis control. In Anoxybacillus flavithermus (strain DSM 21510 / WK1), this protein is GTPase Obg.